We begin with the raw amino-acid sequence, 48 residues long: Large ribosomal subunit protein bL33 (48 aa).

The protein belongs to the bacterial ribosomal protein bL33 family.

In Streptococcus mutans serotype c (strain ATCC 700610 / UA159), this protein is Large ribosomal subunit protein bL33.